Consider the following 238-residue polypeptide: Sarcospan (238 aa).

The tract at residues 1-33 (MGKDRQPRGQQRQGDAAGPDDPGPKKGAGTREQ) is disordered. At 1–48 (MGKDRQPRGQQRQGDAAGPDDPGPKKGAGTREQRGEEEAQTCCGCRFP) the chain is on the extracellular side. Over residues 8–20 (RGQQRQGDAAGPD) the composition is skewed to low complexity. A helical transmembrane segment spans residues 49-69 (LLLALLQLALGVAVTVVGFLM). The Cytoplasmic segment spans residues 70 to 81 (ASVSSSLLVRAT). Residues 82-102 (PYWAGIIVCVVAYLGLFMLCV) form a helical membrane-spanning segment. Residues 103–117 (SYQVDERTCIQFSMK) are Cytoplasmic-facing. The helical transmembrane segment at 118 to 138 (LLYFVLSALGLVVCVLAVAFA) threads the bilayer. The Extracellular segment spans residues 139-188 (AHHYSLLTHLTCENAPDSCQCKLPSSEPLSRTFVYRDVTDCTSITGTFQV). A helical membrane pass occupies residues 189–209 (FLLVQMVLNLVCGLVCLVACF). Residues 210 to 238 (VMWKHRYQVFYVGVRMCPLSASEGQQQKV) are Cytoplasmic-facing.

It is found in the cell membrane. The protein localises to the sarcolemma. Its subcellular location is the postsynaptic cell membrane. Component of the dystrophin-glycoprotein complex (DGC), a complex that spans the muscle plasma membrane and forms a link between the F-actin cytoskeleton and the extracellular matrix. Preferentially associates with the sarcoglycan subcomplex of the DGC. This is Sarcospan (SSPN) from Oryctolagus cuniculus (Rabbit).